The chain runs to 566 residues: Nitrate/nitrite sensor protein NarQ (566 aa).

At 1–13 (MIVKRPVSASLAR) the chain is on the cytoplasmic side. Residues 14-34 (AFFYIVLLSILSTGIALLTLA) traverse the membrane as a helical segment. Residues 35-146 (SSLRDAEAIN…LALQHYAERK (112 aa)) are Periplasmic-facing. A helical membrane pass occupies residues 147–167 (MLLVVAISLAGGIGIFTLVFF). Topologically, residues 168 to 566 (TLRRIRHQVV…SAEGEESQLM (399 aa)) are cytoplasmic. The HAMP domain maps to 174 to 227 (HQVVAPLNQLVTASQRIEHGQFDSPPLDTNLPNELGLLAKTFNQMSSELHKLYR). Positions 364 to 559 (TIARELHDSL…LVSISFRSAE (196 aa)) constitute a Histidine kinase domain. The residue at position 370 (His-370) is a Phosphohistidine; by autocatalysis.

The protein resides in the cell inner membrane. It catalyses the reaction ATP + protein L-histidine = ADP + protein N-phospho-L-histidine.. Functionally, acts as a sensor for nitrate/nitrite and transduces signal of nitrate/nitrite availability to the NarL/NarP proteins. NarQ probably activates NarL and NarP by phosphorylation. NarQ probably negatively regulates the NarL protein by dephosphorylation. This Escherichia coli (strain K12) protein is Nitrate/nitrite sensor protein NarQ (narQ).